We begin with the raw amino-acid sequence, 352 residues long: N-acetyl-gamma-glutamyl-phosphate reductase 1 (352 aa).

This sequence belongs to the NAGSA dehydrogenase family. Type 1 subfamily.

The protein resides in the cytoplasm. The catalysed reaction is N-acetyl-L-glutamate 5-semialdehyde + phosphate + NADP(+) = N-acetyl-L-glutamyl 5-phosphate + NADPH + H(+). It participates in amino-acid biosynthesis; L-arginine biosynthesis; N(2)-acetyl-L-ornithine from L-glutamate: step 3/4. Its function is as follows. Catalyzes the NADPH-dependent reduction of N-acetyl-5-glutamyl phosphate to yield N-acetyl-L-glutamate 5-semialdehyde. The protein is N-acetyl-gamma-glutamyl-phosphate reductase 1 of Nostoc sp. (strain PCC 7120 / SAG 25.82 / UTEX 2576).